Here is a 474-residue protein sequence, read N- to C-terminus: tRNA-2-methylthio-N(6)-dimethylallyladenosine synthase (474 aa).

Residues 3-120 (KKLHIKTWGC…LPEMIEQIQQ (118 aa)) enclose the MTTase N-terminal domain. Residues C12, C49, C83, C157, C161, and C164 each coordinate [4Fe-4S] cluster. Residues 143 to 375 (RAEGPSAFVS…QDRITQQAMR (233 aa)) enclose the Radical SAM core domain. In terms of domain architecture, TRAM spans 378–441 (RQMLGTVQRI…TNSLRGKFIR (64 aa)).

It belongs to the methylthiotransferase family. MiaB subfamily. Monomer. It depends on [4Fe-4S] cluster as a cofactor.

The protein resides in the cytoplasm. The catalysed reaction is N(6)-dimethylallyladenosine(37) in tRNA + (sulfur carrier)-SH + AH2 + 2 S-adenosyl-L-methionine = 2-methylsulfanyl-N(6)-dimethylallyladenosine(37) in tRNA + (sulfur carrier)-H + 5'-deoxyadenosine + L-methionine + A + S-adenosyl-L-homocysteine + 2 H(+). Its function is as follows. Catalyzes the methylthiolation of N6-(dimethylallyl)adenosine (i(6)A), leading to the formation of 2-methylthio-N6-(dimethylallyl)adenosine (ms(2)i(6)A) at position 37 in tRNAs that read codons beginning with uridine. In Shewanella loihica (strain ATCC BAA-1088 / PV-4), this protein is tRNA-2-methylthio-N(6)-dimethylallyladenosine synthase.